The chain runs to 757 residues: Xaa-Pro dipeptidyl-peptidase (757 aa).

Active-site charge relay system residues include Ser-348, Asp-468, and His-498.

It belongs to the peptidase S15 family. Homodimer.

Its subcellular location is the cytoplasm. It catalyses the reaction Hydrolyzes Xaa-Pro-|- bonds to release unblocked, N-terminal dipeptides from substrates including Ala-Pro-|-p-nitroanilide and (sequentially) Tyr-Pro-|-Phe-Pro-|-Gly-Pro-|-Ile.. In terms of biological role, removes N-terminal dipeptides sequentially from polypeptides having unsubstituted N-termini provided that the penultimate residue is proline. The sequence is that of Xaa-Pro dipeptidyl-peptidase from Streptococcus pneumoniae (strain ATCC 700669 / Spain 23F-1).